A 127-amino-acid polypeptide reads, in one-letter code: Apolipoprotein C-IV (127 aa).

An N-terminal signal peptide occupies residues 1–27 (MSLLRNRLQDLPALCLCVLVLACIGAC).

It belongs to the apolipoprotein C4 family.

Its subcellular location is the secreted. In terms of biological role, may participate in lipoprotein metabolism. This is Apolipoprotein C-IV (APOC4) from Chlorocebus sabaeus (Green monkey).